Reading from the N-terminus, the 254-residue chain is Phosphoribosylaminoimidazole-succinocarboxamide synthase (254 aa).

Belongs to the SAICAR synthetase family.

The enzyme catalyses 5-amino-1-(5-phospho-D-ribosyl)imidazole-4-carboxylate + L-aspartate + ATP = (2S)-2-[5-amino-1-(5-phospho-beta-D-ribosyl)imidazole-4-carboxamido]succinate + ADP + phosphate + 2 H(+). The protein operates within purine metabolism; IMP biosynthesis via de novo pathway; 5-amino-1-(5-phospho-D-ribosyl)imidazole-4-carboxamide from 5-amino-1-(5-phospho-D-ribosyl)imidazole-4-carboxylate: step 1/2. The protein is Phosphoribosylaminoimidazole-succinocarboxamide synthase of Rhizobium meliloti (strain 1021) (Ensifer meliloti).